We begin with the raw amino-acid sequence, 446 residues long: Transcriptional regulator STERILE APETALA (446 aa).

Low complexity predominate over residues 1–10 (MSTSSSSSDN). Positions 1–32 (MSTSSSSSDNGAGGSGGVFEAPSPSRPRRGAN) are disordered.

As to expression, expressed in inflorescence and floral meristems, young floral organ primordia, and later in ovule primordia.

The protein localises to the nucleus. Functionally, transcriptional regulator involved in the specification of floral identity. Acts as A class cadastral protein by repressing the C class floral homeotic gene AGAMOUS in the external flower organs in association with APETALA2 and other repressors. Is required to maintain floral meristem identity in concert with AGAMOUS. Also interacts with APETALA2 to ensure the normal development of ovule. The protein is Transcriptional regulator STERILE APETALA (SAP) of Arabidopsis thaliana (Mouse-ear cress).